The chain runs to 37 residues: MVEPLLCGIVLGLIPITLAGLFVAAYQQYKRGKELGV.

The helical transmembrane segment at 5–25 threads the bilayer; that stretch reads LLCGIVLGLIPITLAGLFVAA.

It belongs to the PetG family. The 4 large subunits of the cytochrome b6-f complex are cytochrome b6, subunit IV (17 kDa polypeptide, PetD), cytochrome f and the Rieske protein, while the 4 small subunits are PetG, PetL, PetM and PetN. The complex functions as a dimer.

Its subcellular location is the cellular thylakoid membrane. Its function is as follows. Component of the cytochrome b6-f complex, which mediates electron transfer between photosystem II (PSII) and photosystem I (PSI), cyclic electron flow around PSI, and state transitions. PetG is required for either the stability or assembly of the cytochrome b6-f complex. This is Cytochrome b6-f complex subunit 5 from Cyanothece sp. (strain PCC 7425 / ATCC 29141).